The primary structure comprises 291 residues: Acetyl-coenzyme A carboxylase carboxyl transferase subunit beta (291 aa).

Positions 29 to 291 (LWSKCPECGE…MHQQPAAVSA (263 aa)) constitute a CoA carboxyltransferase N-terminal domain. Residues C33, C36, C52, and C55 each contribute to the Zn(2+) site. The C4-type zinc finger occupies 33 to 55 (CPECGEVVYRKDLIANASVCASC).

Belongs to the AccD/PCCB family. In terms of assembly, acetyl-CoA carboxylase is a heterohexamer composed of biotin carboxyl carrier protein (AccB), biotin carboxylase (AccC) and two subunits each of ACCase subunit alpha (AccA) and ACCase subunit beta (AccD). It depends on Zn(2+) as a cofactor.

The protein localises to the cytoplasm. The catalysed reaction is N(6)-carboxybiotinyl-L-lysyl-[protein] + acetyl-CoA = N(6)-biotinyl-L-lysyl-[protein] + malonyl-CoA. Its pathway is lipid metabolism; malonyl-CoA biosynthesis; malonyl-CoA from acetyl-CoA: step 1/1. Component of the acetyl coenzyme A carboxylase (ACC) complex. Biotin carboxylase (BC) catalyzes the carboxylation of biotin on its carrier protein (BCCP) and then the CO(2) group is transferred by the transcarboxylase to acetyl-CoA to form malonyl-CoA. This Synechococcus sp. (strain RCC307) protein is Acetyl-coenzyme A carboxylase carboxyl transferase subunit beta.